The following is a 264-amino-acid chain: Movement protein (264 aa).

The interval 211–264 (RTKSSKRGPKNNNNLGKGRSGGRPKPKSVDEVEEEFDNLIEDEAETSVADSDSY) is disordered. A compositionally biased stretch (acidic residues) spans 241–255 (EVEEEFDNLIEDEAE).

Belongs to the tobamovirus movement protein family. In terms of assembly, binds to host RBCS at the plasmodesmata; this interaction seems required for viral systemic movement. In resistant plants, interacts with host MBP2C at host microtubules; this interaction prevents virus cell to cell movement. In resistant plants, interacts with host resistance (R) protein (e.g. tomato ToMV resistance protein TM-2(2), AC Q71BG9) at the host plasma membrane; this interaction triggers host defense responses leading to programmed cell death.

The protein localises to the host cytoplasm. The protein resides in the host cytoskeleton. It is found in the host cell junction. It localises to the host plasmodesma. In terms of biological role, transports viral genome to neighboring plant cells directly through plasmosdesmata, without any budding. The movement protein allows efficient cell to cell propagation, by bypassing the host cell wall barrier. Forms a ribonucleoprotein complex with viral RNA. Binds microtubules and modulates microtubule stability. Can bind double-stranded DNA. Triggers host hypersensitive defense reaction in incompatible plants harboring resistance (R) proteins. This is Movement protein (MP) from Antirrhinum majus (Garden snapdragon).